Reading from the N-terminus, the 284-residue chain is 2-dehydro-3-deoxyphosphooctonate aldolase (284 aa).

It belongs to the KdsA family.

Its subcellular location is the cytoplasm. It catalyses the reaction D-arabinose 5-phosphate + phosphoenolpyruvate + H2O = 3-deoxy-alpha-D-manno-2-octulosonate-8-phosphate + phosphate. Its pathway is carbohydrate biosynthesis; 3-deoxy-D-manno-octulosonate biosynthesis; 3-deoxy-D-manno-octulosonate from D-ribulose 5-phosphate: step 2/3. It participates in bacterial outer membrane biogenesis; lipopolysaccharide biosynthesis. The polypeptide is 2-dehydro-3-deoxyphosphooctonate aldolase (Methylobacterium radiotolerans (strain ATCC 27329 / DSM 1819 / JCM 2831 / NBRC 15690 / NCIMB 10815 / 0-1)).